The chain runs to 148 residues: Hemoglobin subunit beta-4 (148 aa).

Residues 3–148 (DWTDPERSAI…VVSALGRQYH (146 aa)) enclose the Globin domain. Histidine 64 and histidine 93 together coordinate heme b.

The protein belongs to the globin family. As to quaternary structure, heterotetramer of two alpha chains and two beta chains. Red blood cells.

In terms of biological role, involved in oxygen transport from gills to the various peripheral tissues. The chain is Hemoglobin subunit beta-4 (hbb4) from Oncorhynchus mykiss (Rainbow trout).